Consider the following 861-residue polypeptide: Leucine--tRNA ligase (861 aa).

Positions P42–H52 match the 'HIGH' region motif. Positions K620–S624 match the 'KMSKS' region motif. K623 lines the ATP pocket.

This sequence belongs to the class-I aminoacyl-tRNA synthetase family.

The protein resides in the cytoplasm. The catalysed reaction is tRNA(Leu) + L-leucine + ATP = L-leucyl-tRNA(Leu) + AMP + diphosphate. This Hahella chejuensis (strain KCTC 2396) protein is Leucine--tRNA ligase.